A 357-amino-acid chain; its full sequence is MNDLRLKKDRKLLEILKTMAPGTDMREGLENILRAKTGGLVVLGDNEEVMKLSDGGFKINSEYSASYIYELAKMDGAIILSSDLKKIVRANVQLVPDSSIPTFETGTRHRTAHRVAKQTGNVVVAISQRRNVITIYKDDIKYILRDSSIILARANQAIQTLEKYVAVLDRVMGNLNLLEFEDLCTLHDVVAAIQRTEMVMRVVTEIDRYICELGNEGRLISMQLNELVKNVEQDGMLIIRDYCQNEMNYSKVCETIQSMSSEEFLNSEAISKVMGYGDVPLIDTLISPRGYRMTSKIPRIPFIVIENLVKNFKELKKILEASHEDLDKVEGIGEARARAIKSGLRKLKEQTIIRKQL.

The DAC domain maps to 9–147 (DRKLLEILKT…DDIKYILRDS (139 aa)). ATP contacts are provided by residues Gly-76, Leu-94, and 107–111 (TRHRT).

It belongs to the DisA family. In terms of assembly, homooctamer. It depends on Mg(2+) as a cofactor.

It catalyses the reaction 2 ATP = 3',3'-c-di-AMP + 2 diphosphate. Functionally, participates in a DNA-damage check-point that is active prior to asymmetric division when DNA is damaged. DisA forms globular foci that rapidly scan along the chromosomes during sporulation, searching for lesions. When a lesion is present, DisA pauses at the lesion site. This triggers a cellular response that culminates in a temporary block in sporulation initiation. In terms of biological role, also has diadenylate cyclase activity, catalyzing the condensation of 2 ATP molecules into cyclic di-AMP (c-di-AMP). c-di-AMP acts as a signaling molecule that couples DNA integrity with progression of sporulation. The rise in c-di-AMP level generated by DisA while scanning the chromosome, operates as a positive signal that advances sporulation; upon encountering a lesion, the DisA focus arrests at the damaged site and halts c-di-AMP synthesis. The polypeptide is DNA integrity scanning protein DisA (Clostridium acetobutylicum (strain ATCC 824 / DSM 792 / JCM 1419 / IAM 19013 / LMG 5710 / NBRC 13948 / NRRL B-527 / VKM B-1787 / 2291 / W)).